Consider the following 88-residue polypeptide: MAASRLPPATLTLKQFMRRQQVLLLYRKILRAIKQIPSDSDRKYLQDWAREEFKRNKSATEEDTIRMMITQGNMQLKELERTLALAKS.

A mitochondrion-targeting transit peptide spans 1 to 19 (MAASRLPPATLTLKQFMRR).

The protein belongs to the complex I LYR family.

The protein resides in the mitochondrion. In terms of biological role, involved in efficient integration of the N-module into mitochondrial respiratory chain complex I. The polypeptide is LYR motif-containing protein 2 (Lyrm2) (Rattus norvegicus (Rat)).